A 51-amino-acid chain; its full sequence is Small ribosomal subunit protein uS14 (51 aa).

Residues C16, C19, C34, and C37 each coordinate Zn(2+).

Belongs to the universal ribosomal protein uS14 family. Zinc-binding uS14 subfamily. As to quaternary structure, part of the 30S ribosomal subunit. The cofactor is Zn(2+).

Functionally, binds 16S rRNA, required for the assembly of 30S particles. This Archaeoglobus fulgidus (strain ATCC 49558 / DSM 4304 / JCM 9628 / NBRC 100126 / VC-16) protein is Small ribosomal subunit protein uS14.